The sequence spans 705 residues: Ribonuclease R (705 aa).

Residues 240 to 567 (RRDLREQLCF…VHRLLKKALR (328 aa)) enclose the RNB domain. The S1 motif domain occupies 615-696 (GEEFIGIITG…ERARVEFELI (82 aa)).

The protein belongs to the RNR ribonuclease family. RNase R subfamily.

It is found in the cytoplasm. The enzyme catalyses Exonucleolytic cleavage in the 3'- to 5'-direction to yield nucleoside 5'-phosphates.. Its function is as follows. 3'-5' exoribonuclease that releases 5'-nucleoside monophosphates and is involved in maturation of structured RNAs. This chain is Ribonuclease R, found in Aquifex aeolicus (strain VF5).